The following is a 1403-amino-acid chain: Nidogen-2 (1403 aa).

The N-terminal stretch at 1-30 (MFRDPTAGWLTPPSPLSLLVMLLLLSRVGA) is a signal peptide. In terms of domain architecture, NIDO spans 108 to 274 (PFLADIDTSH…GVWAFHIGSR (167 aa)). The tract at residues 323–403 (EDVEYPPVEP…KQGRPVGEGE (81 aa)) is disordered. O-linked (Xyl...) (chondroitin sulfate) serine glycans are attached at residues S386 and S475. A compositionally biased stretch (polar residues) spans 386-395 (SASLDPQTKQ). The region spanning 507–547 (NLETCEHSHGRCSQHAFCTDYTTGFCCHCQSRFYGNGKHCL) is the EGF-like 1 domain. Intrachain disulfides connect C511-C524, C518-C533, and C535-C546. The Nidogen G2 beta-barrel domain maps to 551 to 781 (APHRVNGKVS…GPVEVDSAPV (231 aa)). N681, N716, and N726 each carry an N-linked (GlcNAc...) asparagine glycan. The region spanning 782 to 823 (GVNPCYDGSHTCDTTARCHPGTGVDYTCECTPGFQGDGRSCV) is the EGF-like 2 domain. Cystine bridges form between C786/C799, C793/C809, C811/C822, C828/C841, C835/C850, C852/C865, C875/C890, C882/C900, C902/C913, C919/C930, C924/C939, C941/C952, C968/C991, C1002/C1009, C1011/C1033, C1047/C1071, C1082/C1089, and C1091/C1112. The EGF-like 3; calcium-binding domain occupies 824–862 (DVNECATGFHRCGPNSVCVNLVGSYRCECRSGYEFADDQ). Residues 871-914 (PPNPCLDGSHTCAPEGQARCIHHGGSSFSCACLPGFIGTGHQCS) form the EGF-like 4 domain. One can recognise an EGF-like 5; calcium-binding domain in the interval 915-953 (DVDECAENRCHEAAICYNTPGSFSCRCQPGYRGDGFHCT). The Cell attachment site motif lies at 946–948 (RGD). 2 consecutive Thyroglobulin type-1 domains span residues 965 to 1033 (LKPC…PPHC) and 1044 to 1112 (RTVC…RPAC). Positions 1021 to 1043 (GTQTPPGSTPPHCGPPPEPTQRP) are disordered. Over residues 1027–1040 (GSTPPHCGPPPEPT) the composition is skewed to pro residues. The N-linked (GlcNAc...) asparagine glycan is linked to N1152. LDL-receptor class B repeat units lie at residues 1182-1225 (RMVY…DHFR), 1226-1268 (RTMY…DPIR), 1269-1313 (GNLY…DPFS), 1314-1355 (KLLC…YADH), and 1357-1401 (YHTD…CPTG). Omega-N-methylarginine is present on R1336.

As to quaternary structure, interacts with LAMA2. Interacts with COL13A1. Interacts with EFEMP2. Highly N- and O-glycosylated.

It is found in the secreted. The protein resides in the extracellular space. It localises to the extracellular matrix. Its subcellular location is the basement membrane. In terms of biological role, cell adhesion glycoprotein. Might be involved in osteoblast differentiation. It probably has a role in cell-extracellular matrix interactions. The chain is Nidogen-2 (Nid2) from Mus musculus (Mouse).